Here is a 304-residue protein sequence, read N- to C-terminus: Protoheme IX farnesyltransferase (304 aa).

9 helical membrane passes run 31–51 (VNTL…PDGL), 58–78 (VAAT…NCLI), 99–119 (LAPA…LTVL), 126–146 (LTMW…TVLL), 154–174 (IVIG…AVTG), 180–200 (ALLL…ALAL), 222–242 (FTRL…LLPF), 243–263 (ATRM…IGFL), and 284–304 (FSIL…YLPL).

Belongs to the UbiA prenyltransferase family. Protoheme IX farnesyltransferase subfamily.

The protein resides in the cell inner membrane. The enzyme catalyses heme b + (2E,6E)-farnesyl diphosphate + H2O = Fe(II)-heme o + diphosphate. It participates in porphyrin-containing compound metabolism; heme O biosynthesis; heme O from protoheme: step 1/1. Functionally, converts heme B (protoheme IX) to heme O by substitution of the vinyl group on carbon 2 of heme B porphyrin ring with a hydroxyethyl farnesyl side group. This is Protoheme IX farnesyltransferase from Aromatoleum aromaticum (strain DSM 19018 / LMG 30748 / EbN1) (Azoarcus sp. (strain EbN1)).